Consider the following 329-residue polypeptide: Serine dehydratase-like (329 aa).

Methionine 1 is modified (N-acetylmethionine). Lysine 48 carries the post-translational modification N6-(pyridoxal phosphate)lysine.

Belongs to the serine/threonine dehydratase family. In terms of assembly, monomer. Homodimer. Requires pyridoxal 5'-phosphate as cofactor.

It catalyses the reaction L-serine = pyruvate + NH4(+). It carries out the reaction L-threonine = 2-oxobutanoate + NH4(+). The enzyme catalyses L-glutamate = D-glutamate. With respect to regulation, serine dehydratase activity is inhibited by manganese chloride, ferrous chloride, cobalt chloride, cupric chloride, nickel chloride and zinc chloride. Glutamate racemase activity is inhibited by manganese chloride, ferrous chloride, cupric chloride and zinc chloride. In terms of biological role, catalyzes the pyridoxal-phosphate-dependent dehydrative deamination of L-threonine and L-serine to ammonia and alpha-ketobutyrate and pyruvate, respectively. Also exhibits racemase activity towards L-glutamate and D-glutamate. The polypeptide is Serine dehydratase-like (Sdsl) (Rattus norvegicus (Rat)).